Reading from the N-terminus, the 501-residue chain is Carboxypeptidase 1 (501 aa).

Positions 3-496 (IHTYEKEFFD…LIDYLSNKYS (494 aa)) constitute a Peptidase M32 domain. Residues 234-236 (HPF) carry the HPF motif. The short motif at 244 to 248 (DVRVT) is the DXRXT element. Histidine 265 lines the Zn(2+) pocket. The short motif at 265 to 269 (HECGH) is the HEXXH element. The Proton donor/acceptor role is filled by glutamate 266. Histidine 269 and glutamate 295 together coordinate Zn(2+). Residues 294-297 (HESQ) carry the HES/GQ motif. Residues 347-352 (IRVEAD) carry the I/NRXXA/SD motif. A GXXQDXHW motif is present at residues 402 to 409 (GILQDVHW).

This sequence belongs to the peptidase M32 family. As to quaternary structure, homodimer. Zn(2+) is required as a cofactor.

The enzyme catalyses Release of a C-terminal amino acid with broad specificity, except for -Pro.. Its function is as follows. Broad specificity carboxypetidase that releases amino acids sequentially from the C-terminus, including neutral, aromatic, polar and basic residues. Has lower activity with substrates ending with His or Trp. The protein is Carboxypeptidase 1 (ypwA) of Bacillus subtilis (strain 168).